The chain runs to 256 residues: 3-deoxy-manno-octulosonate cytidylyltransferase (256 aa).

This sequence belongs to the KdsB family.

It is found in the cytoplasm. The catalysed reaction is 3-deoxy-alpha-D-manno-oct-2-ulosonate + CTP = CMP-3-deoxy-beta-D-manno-octulosonate + diphosphate. It participates in nucleotide-sugar biosynthesis; CMP-3-deoxy-D-manno-octulosonate biosynthesis; CMP-3-deoxy-D-manno-octulosonate from 3-deoxy-D-manno-octulosonate and CTP: step 1/1. The protein operates within bacterial outer membrane biogenesis; lipopolysaccharide biosynthesis. Activates KDO (a required 8-carbon sugar) for incorporation into bacterial lipopolysaccharide in Gram-negative bacteria. The chain is 3-deoxy-manno-octulosonate cytidylyltransferase from Histophilus somni (strain 129Pt) (Haemophilus somnus).